Here is a 286-residue protein sequence, read N- to C-terminus: 33 kDa chaperonin (286 aa).

Disulfide bonds link C225/C227 and C258/C261.

Belongs to the HSP33 family. Under oxidizing conditions two disulfide bonds are formed involving the reactive cysteines. Under reducing conditions zinc is bound to the reactive cysteines and the protein is inactive.

It localises to the cytoplasm. Its function is as follows. Redox regulated molecular chaperone. Protects both thermally unfolding and oxidatively damaged proteins from irreversible aggregation. Plays an important role in the bacterial defense system toward oxidative stress. This Shewanella frigidimarina (strain NCIMB 400) protein is 33 kDa chaperonin.